A 2188-amino-acid chain; its full sequence is Genome polyprotein (2188 aa).

Residues 772–774 carry the Cell attachment site motif; the sequence is RGD. In terms of domain architecture, LRAT spans 795–889; sequence LAYLDRGFYK…DIFGTHTLSQ (95 aa). His-805 acts as the For protein 2A H-NC in catalysis. The For protein 2A H-NC; Acyl-thioester intermediate role is filled by Cys-874. Residues 1165–1326 form the SF3 helicase domain; that stretch reads FQELARIPNR…KAYSKSGKLN (162 aa). ATP is bound at residue 1193-1200; sequence GEPGQGKS. Tyr-1502 is modified (O-(5'-phospho-RNA)-tyrosine). The Peptidase C3 domain occupies 1526-1716; it reads APYDGQLEHI…IPFNFLKNDM (191 aa). Residues His-1566, Asp-1604, and Cys-1678 each act as for protease 3C activity in the active site. Cys-1905 serves as the catalytic Acyl-thioester intermediate. Positions 1953–2067 constitute a RdRp catalytic domain; that stretch reads DYNYEMDYSQ…SLDREIEPER (115 aa). Mg(2+)-binding residues include Asp-1959 and Asp-2053.

Belongs to the picornaviruses polyprotein family. Interacts with capsid protein VP1 and capsid protein VP3 to form heterotrimeric protomers. Five protomers subsequently associate to form pentamers which serve as building blocks for the capsid. As to quaternary structure, interacts with capsid protein VP0, and capsid protein VP3 to form heterotrimeric protomers. Five protomers subsequently associate to form pentamers which serve as building blocks for the capsid. In terms of assembly, interacts with capsid protein VP0 and capsid protein VP1 to form heterotrimeric protomers. Five protomers subsequently associate to form pentamers which serve as building blocks for the capsid. Homohexamer; forms a hexameric ring structure with 6-fold symmetry characteristic of AAA+ ATPases. As to quaternary structure, homodimer. Interacts with host ACBD3. In terms of assembly, interacts with RNA-directed RNA polymerase. Interacts with Viral protein genome-linked. It depends on Mg(2+) as a cofactor. In terms of processing, VPg is uridylylated by the polymerase and is covalently linked to the 5'-end of genomic RNA. This uridylylated form acts as a nucleotide-peptide primer for the polymerase. Specific enzymatic cleavages yield mature proteins. All cleavages are catalyzed by P3C.

It localises to the virion. It is found in the host cytoplasm. The protein localises to the host nucleus. Its subcellular location is the host nucleolus. The protein resides in the host cytoplasmic vesicle membrane. It carries out the reaction RNA(n) + a ribonucleoside 5'-triphosphate = RNA(n+1) + diphosphate. The catalysed reaction is a ribonucleoside 5'-triphosphate + H2O = a ribonucleoside 5'-diphosphate + phosphate + H(+). It catalyses the reaction Selective cleavage of Gln-|-Gly bond in the poliovirus polyprotein. In other picornavirus reactions Glu may be substituted for Gln, and Ser or Thr for Gly.. Forms an icosahedral capsid of pseudo T=3 symmetry together with capsid proteins VP1 and VP3. The capsid is 300 Angstroms in diameter, composed of 60 copies of each capsid protein and enclosing the viral positive strand RNA genome. Capsid proteins interact with host alpha-V/beta-3 integrin heterodimer to provide virion attachment target cell. This attachment induces virion internalization predominantly through clathrin-mediated endocytosis. Binds packaging signals present in the viral RNA. Its function is as follows. Forms an icosahedral capsid of pseudo T=3 symmetry together with capsid proteins VP0 and VP1. The capsid is 300 Angstroms in diameter, composed of 60 copies of each capsid protein and enclosing the viral positive strand RNA genome. Capsid proteins interact with host alpha-V/beta-3 integrin heterodimer to provide virion attachment target cell. This attachment induces virion internalization predominantly through clathrin-mediated endocytosis. Binds packaging signals present in the viral RNA. Functionally, forms an icosahedral capsid of pseudo T=3 symmetry together with capsid proteins VP0 and VP3. The capsid is 300 Angstroms in diameter, composed of 60 copies of each capsid protein and enclosing the viral positive strand RNA genome. Capsid proteins interact with host alpha-V/beta-3 integrin heterodimer to provide virion attachment target cell. This attachment induces virion internalization predominantly through clathrin-mediated endocytosis. Binds packaging signals present in the viral RNA. In terms of biological role, is not a protease. Plays an essential role in the virus replication cycle by acting as a viroporin. Creates a pore in the host endoplasmic reticulum and as a consequence releases Ca2+ in the cytoplasm of infected cell. In turn, high levels of cytoplasmic calcium may trigger membrane trafficking and transport of viral ER-associated proteins to viroplasms, sites of viral genome replication. Its function is as follows. Induces and associates with structural rearrangements of intracellular membranes. Displays RNA-binding, nucleotide binding and NTPase activities. May play a role in virion morphogenesis and viral RNA encapsidation by interacting with the capsid protein VP3. Functionally, localizes the viral replication complex to the surface of membranous vesicles. It inhibits host cell endoplasmic reticulum-to-Golgi apparatus transport and causes the disassembly of the Golgi complex, possibly through GBF1 interaction. This would result in depletion of MHC, trail receptors and IFN receptors at the host cell surface. Plays an essential role in viral RNA replication by recruiting ACBD3 and PI4KB at the viral replication sites, thereby allowing the formation of the rearranged membranous structures where viral replication takes place. In terms of biological role, acts as a primer for viral RNA replication and remains covalently bound to viral genomic RNA. VPg is uridylylated prior to priming replication into VPg-pUpU. The VPg-pUpU is then used as primer on the genomic RNA poly(A) by the RNA-dependent RNA polymerase to replicate the viral genome. Following genome release from the infecting virion in the cytoplasm, the VPg-RNA linkage is probably removed by host TDP2. During the late stage of the replication cycle, host TDP2 is excluded from sites of viral RNA synthesis and encapsidation, allowing for the generation of progeny virions. Cysteine protease that generates mature viral proteins from the precursor polyprotein. In addition to its proteolytic activity, it binds to viral RNA, and thus influences viral genome replication. RNA and substrate bind cooperatively to the protease. Its function is as follows. Replicates the viral genomic RNA on the surface of intracellular membranes. Covalently attaches UMP to a tyrosine of VPg, which is used to prime RNA synthesis. The positive stranded RNA genome is first replicated at virus induced membranous vesicles, creating a dsRNA genomic replication form. This dsRNA is then used as template to synthesize positive stranded RNA genomes. ss(+)RNA genomes are either translated, replicated or encapsidated. The polypeptide is Genome polyprotein (Human parechovirus 5 (strain CT86-6760) (HPeV-5)).